A 142-amino-acid chain; its full sequence is uncharacterized protein (142 aa).

This is an uncharacterized protein from Pseudomonas putida (Arthrobacter siderocapsulatus).